The primary structure comprises 467 residues: MTLKPIHVIGGGMAGSEAAWQIASAGVPVILHEMRGVRGTDAHQTDKLAELVCSNSFRSDDHTTNAVGVIHEEMRRANGLIITTAKDHQVPAGSALAVDREGFSEAITAKLEAHPLVTIVREEIAGLPPEDWDSVIVATGPLTSIALAEAVRAHTGETDLAFFDAIAPIVYFESIDMDKAWRQSRYDKAGPSGDTAAYINCPMTEEQYNAFLDALLAAPKTEFRDWEKDTPYFEGCLPIEVMAERGRETLRFGPMKPVGLTNPHNPTVKAHAIVQLRQDNALGTLWNMVGFQTKLKYAAQTDIFRMIPGLEKAEFARLGGIHRNTFLNSPKLLDRQLRMKSMPRLRFAGQVTGVEGYVESAAMGLLAGRFAAAERLGQRLEPPPPTTAMGALISHITGGHLAEKQTFQPMNVNFGLFPDITDYSKTDENGKRLRGKDKGRAKKIAQAIRALQDFDAWLAGEAVVAAE.

10-15 (GGGMAG) lines the FAD pocket.

The protein belongs to the MnmG family. TrmFO subfamily. Requires FAD as cofactor.

It is found in the cytoplasm. It carries out the reaction uridine(54) in tRNA + (6R)-5,10-methylene-5,6,7,8-tetrahydrofolate + NADH + H(+) = 5-methyluridine(54) in tRNA + (6S)-5,6,7,8-tetrahydrofolate + NAD(+). The enzyme catalyses uridine(54) in tRNA + (6R)-5,10-methylene-5,6,7,8-tetrahydrofolate + NADPH + H(+) = 5-methyluridine(54) in tRNA + (6S)-5,6,7,8-tetrahydrofolate + NADP(+). Its function is as follows. Catalyzes the folate-dependent formation of 5-methyl-uridine at position 54 (M-5-U54) in all tRNAs. This chain is Methylenetetrahydrofolate--tRNA-(uracil-5-)-methyltransferase TrmFO, found in Hyphomonas neptunium (strain ATCC 15444).